The sequence spans 218 residues: MTEPLILQPAKPADACVIWLHGLGADRYDFMPVAEALQESLLTTRFVLPQAPTRPVTINGGYEMPSWYDIKAMSPARSISLEELEVSAKMVTDLIEAQKRTGIDASRIFLAGFSQGGAVVFHTAFINWQGPLGGVIALSTYAPTFGDELELSASQQRIPALCLHGQYDDVVQNAMGRSAFEHLKSRGVTVTWQEYPMGHEVLPQEIHDIGAWLAARLG.

Catalysis depends on charge relay system residues Ser-114, Asp-168, and His-199.

This sequence belongs to the AB hydrolase superfamily. AB hydrolase 2 family. Homodimer.

It catalyses the reaction a carboxylic ester + H2O = an alcohol + a carboxylate + H(+). Functionally, hydrolyzes carboxylic ester bonds with relatively broad substrate specificity. The sequence is that of Carboxylesterase 2 (estB) from Pseudomonas fluorescens.